Consider the following 255-residue polypeptide: Thiazole synthase (255 aa).

Residue K96 is the Schiff-base intermediate with DXP of the active site. 1-deoxy-D-xylulose 5-phosphate is bound by residues G157, 183-184 (AG), and 205-206 (NT).

The protein belongs to the ThiG family. In terms of assembly, homotetramer. Forms heterodimers with either ThiH or ThiS.

It is found in the cytoplasm. It carries out the reaction [ThiS sulfur-carrier protein]-C-terminal-Gly-aminoethanethioate + 2-iminoacetate + 1-deoxy-D-xylulose 5-phosphate = [ThiS sulfur-carrier protein]-C-terminal Gly-Gly + 2-[(2R,5Z)-2-carboxy-4-methylthiazol-5(2H)-ylidene]ethyl phosphate + 2 H2O + H(+). It participates in cofactor biosynthesis; thiamine diphosphate biosynthesis. Its function is as follows. Catalyzes the rearrangement of 1-deoxy-D-xylulose 5-phosphate (DXP) to produce the thiazole phosphate moiety of thiamine. Sulfur is provided by the thiocarboxylate moiety of the carrier protein ThiS. In vitro, sulfur can be provided by H(2)S. The sequence is that of Thiazole synthase from Geobacillus sp. (strain WCH70).